The primary structure comprises 246 residues: 1-(5-phosphoribosyl)-5-[(5-phosphoribosylamino)methylideneamino] imidazole-4-carboxamide isomerase (246 aa).

Asp-12 functions as the Proton acceptor in the catalytic mechanism. The Proton donor role is filled by Asp-134.

Belongs to the HisA/HisF family.

It is found in the cytoplasm. It carries out the reaction 1-(5-phospho-beta-D-ribosyl)-5-[(5-phospho-beta-D-ribosylamino)methylideneamino]imidazole-4-carboxamide = 5-[(5-phospho-1-deoxy-D-ribulos-1-ylimino)methylamino]-1-(5-phospho-beta-D-ribosyl)imidazole-4-carboxamide. The protein operates within amino-acid biosynthesis; L-histidine biosynthesis; L-histidine from 5-phospho-alpha-D-ribose 1-diphosphate: step 4/9. This Psychrobacter cryohalolentis (strain ATCC BAA-1226 / DSM 17306 / VKM B-2378 / K5) protein is 1-(5-phosphoribosyl)-5-[(5-phosphoribosylamino)methylideneamino] imidazole-4-carboxamide isomerase.